Reading from the N-terminus, the 462-residue chain is PTS system mannitol-specific cryptic EIICB component (462 aa).

Residues 1-24 (MENKSARAKVQAFGGFLTAMVIPN) lie on the Cytoplasmic side of the membrane. Positions 13–344 (FGGFLTAMVI…LKMEKTVETE (332 aa)) constitute a PTS EIIC type-2 domain. A helical transmembrane segment spans residues 25–46 (IGAFIAWGFITALFIPTGWLPN). Over 47 to 50 (EHFA) the chain is Periplasmic. Residues 51–71 (KIVGPMITYLLPVMIGSTGGH) traverse the membrane as a helical segment. Residues 72-134 (LVGGKRGAVM…AGFEMVINNF (63 aa)) lie on the Cytoplasmic side of the membrane. Residues 135 to 156 (SLGIAGMLLCLLGFEVIGPAVL) form a helical membrane-spanning segment. Residues 157–165 (IANTFVKEC) lie on the Periplasmic side of the membrane. A helical transmembrane segment spans residues 166–186 (IEALVHAGYLPLLSVINEPAK). At 187 to 273 (VLFLNNAIDQ…VLMKPLTIIA (87 aa)) the chain is on the cytoplasmic side. A helical membrane pass occupies residues 274–293 (MIAGGMSGTWMFNLLDGGLV). The Periplasmic segment spans residues 294 to 313 (AGPSPGSIFAYLALTPKGSF). Residues 314–335 (LATIAGVTVGTLVSFAITSLIL) traverse the membrane as a helical segment. Topologically, residues 336-462 (KMEKTVETES…FNQLTAEHKH (127 aa)) are cytoplasmic. The region spanning 371–461 (KRIAFVCDAG…LFNQLTAEHK (91 aa)) is the PTS EIIB type-2 domain. Catalysis depends on cysteine 377, which acts as the Phosphocysteine intermediate; for EIIB activity. Cysteine 377 carries the phosphocysteine; by EIIA modification.

It is found in the cell inner membrane. The catalysed reaction is D-mannitol(out) + N(pros)-phospho-L-histidyl-[protein] = D-mannitol 1-phosphate(in) + L-histidyl-[protein]. The phosphoenolpyruvate-dependent sugar phosphotransferase system (sugar PTS), a major carbohydrate active transport system, catalyzes the phosphorylation of incoming sugar substrates concomitantly with their translocation across the cell membrane. The enzyme II CmtAB PTS system is involved in D-mannitol transport. This chain is PTS system mannitol-specific cryptic EIICB component (cmtA), found in Escherichia coli O157:H7.